The following is a 509-amino-acid chain: Scavenger receptor class B member 1 (509 aa).

The Cytoplasmic segment spans residues 1-11 (MGNLSRARRVT). The chain crosses the membrane as a helical span at residues 12 to 32 (AALGFIGLLFAVLGIIMIVMV). The Extracellular portion of the chain corresponds to 33–440 (PSIIKQQVLK…YIQLVLMPKV (408 aa)). N-linked (GlcNAc...) asparagine glycosylation is found at asparagine 102, asparagine 108, asparagine 173, asparagine 212, asparagine 227, asparagine 255, asparagine 310, asparagine 330, and asparagine 383. The cysteines at positions 251 and 384 are disulfide-linked. Residues 441-461 (LHYAQYVLLALGCVLLLIPII) form a helical membrane-spanning segment. Over 462–509 (YQIRSQEKCYLFWISFKKGSKDKEAVQAYSEFLMTSAPKGTVLQEARL) the chain is Cytoplasmic.

The protein belongs to the CD36 family. In terms of processing, N-glycosylated. Post-translationally, the six cysteines of the extracellular domain are all involved in intramolecular disulfide bonds.

The protein resides in the cell membrane. The protein localises to the membrane. It localises to the caveola. Functionally, receptor for different ligands such as phospholipids, cholesterol ester, lipoproteins, phosphatidylserine and apoptotic cells. Receptor for HDL, mediating selective uptake of cholesteryl ether and HDL-dependent cholesterol efflux. Also facilitates the flux of free and esterified cholesterol between the cell surface and apoB-containing lipoproteins and modified lipoproteins, although less efficiently than HDL. May be involved in the phagocytosis of apoptotic cells, via its phosphatidylserine binding activity. This is Scavenger receptor class B member 1 (SCARB1) from Bos taurus (Bovine).